We begin with the raw amino-acid sequence, 563 residues long: GTPase Obg (563 aa).

In terms of domain architecture, Obg spans 2 to 168; it reads SDFVDRVTVH…RDVILELKSI (167 aa). Residues 169 to 349 enclose the OBG-type G domain; the sequence is ADVALVGFPS…LNFALSALVH (181 aa). Residues 175-182, 200-204, 221-224, 301-304, and 330-332 each bind GTP; these read GFPSAGKS, FTTLV, DVPG, NKID, and STA. Residues serine 182 and threonine 202 each coordinate Mg(2+). Residues 383 to 469 form the OCT domain; that stretch reads DEGGSALEFT…ARMVEFDWDP (87 aa). A disordered region spans residues 529–563; that stretch reads RKAGHWADPTVDDDRHDETSLFGHGESSEDGETEE.

This sequence belongs to the TRAFAC class OBG-HflX-like GTPase superfamily. OBG GTPase family. As to quaternary structure, monomer. Mg(2+) serves as cofactor.

It localises to the cytoplasm. Its function is as follows. An essential GTPase which binds GTP, GDP and possibly (p)ppGpp with moderate affinity, with high nucleotide exchange rates and a fairly low GTP hydrolysis rate. Plays a role in control of the cell cycle, stress response, ribosome biogenesis and in those bacteria that undergo differentiation, in morphogenesis control. The chain is GTPase Obg from Bifidobacterium longum (strain DJO10A).